The chain runs to 269 residues: Energy-coupling factor transporter transmembrane protein EcfT (269 aa).

Helical transmembrane passes span arginine 45–leucine 65, valine 75–isoleucine 95, methionine 110–leucine 130, phenylalanine 153–leucine 173, phenylalanine 202–leucine 222, and cysteine 244–leucine 264.

This sequence belongs to the energy-coupling factor EcfT family. As to quaternary structure, forms a stable energy-coupling factor (ECF) transporter complex composed of 2 membrane-embedded substrate-binding proteins (S component), 2 ATP-binding proteins (A component) and 2 transmembrane proteins (T component). May be able to interact with more than 1 S component at a time.

The protein localises to the cell membrane. Functionally, transmembrane (T) component of an energy-coupling factor (ECF) ABC-transporter complex. Unlike classic ABC transporters this ECF transporter provides the energy necessary to transport a number of different substrates. The polypeptide is Energy-coupling factor transporter transmembrane protein EcfT (Thermanaerovibrio acidaminovorans (strain ATCC 49978 / DSM 6589 / Su883) (Selenomonas acidaminovorans)).